A 298-amino-acid polypeptide reads, in one-letter code: Acetylglutamate kinase (298 aa).

Residues 73–74, arginine 95, and asparagine 188 each bind substrate; that span reads GG.

It belongs to the acetylglutamate kinase family. ArgB subfamily.

It is found in the cytoplasm. The enzyme catalyses N-acetyl-L-glutamate + ATP = N-acetyl-L-glutamyl 5-phosphate + ADP. It functions in the pathway amino-acid biosynthesis; L-arginine biosynthesis; N(2)-acetyl-L-ornithine from L-glutamate: step 2/4. Catalyzes the ATP-dependent phosphorylation of N-acetyl-L-glutamate. The polypeptide is Acetylglutamate kinase (Nostoc punctiforme (strain ATCC 29133 / PCC 73102)).